The following is a 79-amino-acid chain: Conotoxin Leo-O1 (79 aa).

An N-terminal signal peptide occupies residues 1–22; the sequence is MKLTCMMLVAVLFLTAWTFVTA. The propeptide occupies 23–51; the sequence is NVSRNGLENLFPEERHEMMNPEAAKLNNR. 3 disulfide bridges follow: Cys-53–Cys-70, Cys-60–Cys-74, and Cys-69–Cys-78.

It belongs to the conotoxin O1 superfamily. Expressed by the venom duct.

It localises to the secreted. This is Conotoxin Leo-O1 from Conus leopardus (Leopard cone).